Reading from the N-terminus, the 154-residue chain is UPF0260 protein HI_1355 (154 aa).

Belongs to the UPF0260 family.

The chain is UPF0260 protein HI_1355 from Haemophilus influenzae (strain ATCC 51907 / DSM 11121 / KW20 / Rd).